Reading from the N-terminus, the 261-residue chain is L-erythrulose-1-phosphate isomerase (261 aa).

The active-site Electrophile is the H99. The Proton acceptor role is filled by E172.

Belongs to the triosephosphate isomerase family.

It catalyses the reaction L-erythrulose 1-phosphate = D-erythrulose 4-phosphate. It participates in carbohydrate metabolism. Functionally, involved in catabolism of D-apiose. Catalyzes the isomerization of L-erythrulose 1-phosphate to D-erythrulose 4-phosphate. This chain is L-erythrulose-1-phosphate isomerase, found in Rhizobium rhizogenes (strain K84 / ATCC BAA-868) (Agrobacterium radiobacter).